Reading from the N-terminus, the 310-residue chain is Glutaminase (310 aa).

Residues serine 66, asparagine 117, glutamate 161, asparagine 168, tyrosine 192, tyrosine 244, and valine 262 each contribute to the substrate site.

It belongs to the glutaminase family. In terms of assembly, homotetramer.

It carries out the reaction L-glutamine + H2O = L-glutamate + NH4(+). The protein is Glutaminase of Shigella boydii serotype 4 (strain Sb227).